The following is a 454-amino-acid chain: Gustatory and odorant receptor 21a (454 aa).

Topologically, residues 1–114 (MTFLDRTMSF…LPRTGYSWGS (114 aa)) are cytoplasmic. Residues 115-135 (KQVMWAIFIYSCQTTIVVLVL) traverse the membrane as a helical segment. The Extracellular portion of the chain corresponds to 136–153 (RERVKKFVTSPDKRFDEA). Residues 154–174 (IYNVIFISLLFTNFLLPVASW) form a helical membrane-spanning segment. The Cytoplasmic segment spans residues 175–206 (RHGPQVAIFKNMWTNYQYKFFKTTGSPIVFPN). The helical transmembrane segment at 207-227 (LYPLTWSLCVFSWLLSIAINL) threads the bilayer. The Extracellular portion of the chain corresponds to 228-237 (SQYFLQPDFR). Residues 238–258 (LWYTFAYYPIIAMLNCFCSLW) traverse the membrane as a helical segment. The Cytoplasmic segment spans residues 259–312 (YINCNAFGTASRALSDALQTTIRGEKPAQKLTEYRHLWVDLSHMMQQLGRAYSN). Residues 313 to 333 (MYGMYCLVIFFTTIIATYGSI) form a helical membrane-spanning segment. Over 334-345 (SEIIDHGATYKE) the chain is Extracellular. The chain crosses the membrane as a helical span at residues 346-366 (VGLFVIVFYCMGLLYIICNEA). The Cytoplasmic segment spans residues 367 to 422 (HYASRKVGLDFQTKLLNINLTAVDAATQKEVEMLLVAINKNPPIMNLDGYANINRE). Residues 423 to 443 (LITTNISFMATYLVVLLQFKI) traverse the membrane as a helical segment. Residues 444–454 (TEQRRIGQQQA) lie on the Extracellular side of the membrane.

The protein belongs to the insect chemoreceptor superfamily. Gustatory receptor (GR) family. Gr21a subfamily. In terms of assembly, gr21a and Gr63a probably form a heterodimer that responds to CO(2). Expressed in the adult labellar chemosensory neurons. Carbon dioxide-responsive neurons coexpress Gr21a and Gr63a in a pair of chemosensory receptors at both larval and adult life stages. A single bilateral neuron, expressing the Gr21a receptor, is responsible for CO(2) detection in larvae.

It localises to the cell membrane. Functionally, gustatory and odorant receptor which mediates acceptance or avoidance behavior, depending on its substrates. Gr21a and Gr63a together are sufficient for carbon dioxide detection and avoidance behavior. It is possible that the CO(2) receptors Gr63a and Gr21a activate the TRPC channels through Galpha49B and Plc21C. This innate olfactory avoidance behavior can be inhibited by inhibitory interactions of the odors such as 1-hexanol and 2,3-butanedione with Gr21a and Gr63a. This Drosophila melanogaster (Fruit fly) protein is Gustatory and odorant receptor 21a (Gr21a).